The primary structure comprises 352 residues: tRNA-specific 2-thiouridylase MnmA (352 aa).

6–13 (AVSGGTDS) provides a ligand contact to ATP. Cys92 serves as the catalytic Nucleophile. A disulfide bridge connects residues Cys92 and Cys189. Gly116 lines the ATP pocket. The interval 139–141 (KDQ) is interaction with tRNA. Cys189 functions as the Cysteine persulfide intermediate in the catalytic mechanism. The tract at residues 294–295 (RY) is interaction with tRNA.

Belongs to the MnmA/TRMU family.

The protein resides in the cytoplasm. It catalyses the reaction S-sulfanyl-L-cysteinyl-[protein] + uridine(34) in tRNA + AH2 + ATP = 2-thiouridine(34) in tRNA + L-cysteinyl-[protein] + A + AMP + diphosphate + H(+). Functionally, catalyzes the 2-thiolation of uridine at the wobble position (U34) of tRNA, leading to the formation of s(2)U34. This chain is tRNA-specific 2-thiouridylase MnmA, found in Lawsonia intracellularis (strain PHE/MN1-00).